We begin with the raw amino-acid sequence, 735 residues long: Muskelin (735 aa).

Ala2 bears the N-acetylalanine mark. Positions 172–204 (REQEAIRLCLKHFRQHNYTEAFESLQKKTKIAL) constitute a LisH domain. The CTLH domain maps to 206 to 258 (HPMLTDMHDKLVLKGDFDACEELIEKAVNDGLFNQYISQQEYKPRWSQIIPKS). Kelch repeat units lie at residues 284–330 (TVYL…SCHK), 339–391 (QIYT…FDHQ), 400–458 (MIYT…SRIG), 469–515 (CLYV…TGFT), 526–578 (EIHV…SLQE), and 597–651 (VHYL…AQMD). The tract at residues 701-735 (DHTYAQRTQLFDTLVNFFPDSMTPPKGNLVDLITL) is important for location in the cytosol.

As to quaternary structure, homodimer; may form higher oligomers. Identified in the CTLH complex that contains GID4, RANBP9 and/or RANBP10, MKLN1, MAEA, RMND5A (or alternatively its paralog RMND5B), GID8, ARMC8, WDR26 and YPEL5. Within this complex, MAEA, RMND5A (or alternatively its paralog RMND5B), GID8, WDR26, and RANBP9 and/or RANBP10 form the catalytic core, while GID4, MKLN1, ARMC8 and YPEL5 have ancillary roles. Interacts with RANBP9. Part of a complex consisting of RANBP9, MKLN1 and GID8. Interacts with GABRA1. Interacts with the C-terminal tail of PTGER3. Detected in brain, especially in hippocampus and cerebellum (at protein level).

The protein localises to the cytoplasm. Its subcellular location is the cytosol. It is found in the nucleus. It localises to the nucleoplasm. The protein resides in the cell projection. The protein localises to the ruffle. Its subcellular location is the cell cortex. It is found in the synapse. It localises to the postsynapse. Functionally, component of the CTLH E3 ubiquitin-protein ligase complex that selectively accepts ubiquitin from UBE2H and mediates ubiquitination and subsequent proteasomal degradation of the transcription factor HBP1. Required for internalization of the GABA receptor GABRA1 from the cell membrane via endosomes and subsequent GABRA1 degradation. Acts as a mediator of cell spreading and cytoskeletal responses to the extracellular matrix component THBS1. The polypeptide is Muskelin (Mkln1) (Mus musculus (Mouse)).